The following is a 377-amino-acid chain: Oleosin-B4 (377 aa).

The polar stretch occupies residues 1–37 (MRNEIQNETAQTDQTQGSMFSFFNLFPFLLPMFEVIK). The next 3 helical transmembrane spans lie at 16–36 (QGSMFSFFNLFPFLLPMFEVI), 38–58 (MVVASVASVVYLGFAGVTLSG), and 69–89 (LFIIFSPILLPAIAATTVLAA). Residues 38–133 (MVVASVASVV…IIPESIKPSN (96 aa)) are hydrophobic. 3 consecutive repeat copies span residues 115-124 (IPESIKPSNI), 125-134 (IPESIKPSNI), and 135-144 (IPEGIKPSNI). Residues 115 to 144 (IPESIKPSNIIPESIKPSNIIPEGIKPSNI) are 3 X 10 AA tandem repeats of I-P-E-[SG]-I-K-P-S-N-[IV]. The segment at 158-377 (KIKAKKEEKS…SSHGSGGKHI (220 aa)) is disordered. Basic and acidic residues-rich tracts occupy residues 162–185 (KKEEKSKGKSEDSSKGKGKSKGED) and 195–231 (DEDKHGSGAKHGKGESKHGKGESTHGKGGKHGSEGKH). One copy of the 2-1 repeat lies at 196–202 (EDKHGSG). The stretch at 196 to 202 (EDKHGSG) is one 2.1 repeat. The interval 196–222 (EDKHGSGAKHGKGESKHGKGESTHGKG) is 3 X 6 AA tandem repeats of E-[SD]-[KT]-H-G-[KS]-G. One copy of the 2-2; truncated repeat lies at 204-208 (KHGKG). Tandem repeats lie at residues 209–215 (ESKHGKG), 216–222 (ESTHGKG), 230–247 (KHGSGGSSMGGGKHGSGG), 260–277 (KHESGGSPMGGGKHGSEG), 278–295 (KHGSGGASMGGGKHGSGG), 296–313 (KHESGGSAMGGGKHGSGG), and 355–359 (SSDGS). The tract at residues 230-313 (KHGSGGSSMG…MGGGKHGSGG (84 aa)) is 4 X 18 AA tandem repeats of K-H-E-S-G-G-[SA]-[PSA]-M-G-G-G-K-H-G-S-[GE]-G. A compositionally biased stretch (gly residues) spans 232 to 244 (GSGGSSMGGGKHG). Over residues 247–263 (GKHETGGKHGSGGKHES) the composition is skewed to basic and acidic residues. Composition is skewed to gly residues over residues 280-292 (GSGGASMGGGKHG) and 302-314 (SAMGGGKHGSGGK). Residues 350 to 369 (SSTSESSDGSSDGSSSDGSS) show a composition bias toward low complexity. A 3 X 5 AA tandem repeats of S-S-D-G-S region spans residues 355–368 (SSDGSSDGSSSDGS). One copy of the 4-2; truncated repeat lies at 360-363 (SDGS). One copy of the 4-3 repeat lies at 364-368 (SSDGS).

This sequence belongs to the oleosin family. In terms of tissue distribution, the full-length protein is found in the tapetal lipid bodies of immature anthers, the proteolytically cleaved C-terminal product is found on the coats of pollen grains. No expression is detected in other flower organs, siliques or seedlings.

It is found in the lipid droplet. It localises to the membrane. Many of the major pollen coat proteins are derived from endoproteolytic cleavage of oleosin-like proteins. This is Oleosin-B4 from Brassica napus (Rape).